A 569-amino-acid chain; its full sequence is Putative diguanylate cyclase DgcQ (569 aa).

The next 2 helical transmembrane spans lie at 25 to 45 (LGPGHVVNLCFIVVLLFSTLL) and 365 to 385 (IALTLLWALFTTMLLLSWYVI). The region spanning 433–568 (HPFSVIQVDL…GRNRVFASDN (136 aa)) is the GGDEF domain. D441 is a binding site for Mg(2+). Positions 449, 454, and 458 each coordinate substrate. E484 is a Mg(2+) binding site. The active-site Proton acceptor is the E484.

Homodimer. Mg(2+) serves as cofactor.

The protein resides in the cell inner membrane. The catalysed reaction is 2 GTP = 3',3'-c-di-GMP + 2 diphosphate. It participates in glycan metabolism; bacterial cellulose biosynthesis. Its pathway is purine metabolism; 3',5'-cyclic di-GMP biosynthesis. Its function is as follows. Catalyzes the synthesis of cyclic-di-GMP (c-di-GMP) via the condensation of 2 GTP molecules. Cyclic-di-GMP is a second messenger which controls cell surface-associated traits in bacteria. Involved in the regulation of cellulose production. The chain is Putative diguanylate cyclase DgcQ from Shigella flexneri.